A 146-amino-acid chain; its full sequence is Probable calcium-binding protein CML32 (146 aa).

EF-hand domains follow at residues 1–33 (MSVAEIFERVDKNKDGKISWDEFAEAIRAFSPS), 34–69 (ITSEEIDNMFREIDVDGDNQIDVAEYASCLMLGGEG), 73–108 (DEDIVMKEAFDLYDIDGDGKISASEIHVVLKRLGEK), and 109–144 (QTIAECIAMVRAVDADGDGFVSFEEFKTMMSCNNKK). Ca(2+) contacts are provided by D11, N13, D15, K17, E22, D47, D49, D51, Q53, E58, D86, D88, D90, K92, E97, D122, D124, D126, and E133.

Functionally, potential calcium sensor. This Arabidopsis thaliana (Mouse-ear cress) protein is Probable calcium-binding protein CML32 (CML32).